An 867-amino-acid polypeptide reads, in one-letter code: MFFEILIGASTKAVKDFISHCYSRLKSIYYCFKRWLMEISGQFKAHDAFVNMCFGHMADIEDFEAELAEEFAEREDEVEEARSLLKLLVAQKSKTGVTEAWTDFFTKSRGGVYAPLSCEPTRQDLEVKSEKLEKLLEEQHQFEVRAAKKYIKEKGRGFINCWNDLRSRLRLVKDVKDEAKDNARAAAKIGAEMFAPVDVQDLYSFTEVKKVETGLMKEVVKERNGEEEKHLEPIMEEVRSIKDTAEARDAASTWITETIKLKNSTLNADELSLATIARYVENVGDKFKLDIASKTYLKQVASMSVPIPTNKDIKLKMVLQSPEARARRERMDVLDSVGFLEGLCTASGFESPFPILGLPEIAVTDGARLRKVSCNIRYLSQTHLGLVYKAPNASLHNALVAVERRVYTVGKGDKAIYPPRPEHDIFTDTMDYFQKSIIEEVGYCKTYPAQLLANSYSAGKRAMYHKAIASLRTIPYHQKDANVQAFLKKEKHWMTKDIAPRLICPRSKRYNIILGTRLKFNEKKIMHAIDSVFGSPTVLSGYDNFKQGRIIAKKWQKFACPVAIGVDASRFDQHVSEQALKWEHGIYNGVFGDSELALALEHQITNNIKMFVEDKMLRFKVRGHRMSGDINTSMGNKLIMCGMMHAYFKKLGVEAELCNNGDDCVIITDRANEKLFDGMYDHFLRYGFNMVTEKPVYELEQLEFCQSKPVSINGKYRMVRRPDSIGKDSTTLLSMLNQSDVKSYMSAVAQCGLVLNAGVPILESFYKCLYRSSGYKKVSEEFIKNVISYGTDERLQGRRTFQDTPITNHSRMSYWESFGVDPKIQQIVERYYDNLTVSAQLQSVKVTTPHLQSILLSIPENHSHNEY.

The RdRp catalytic domain occupies 561–676 (PVAIGVDASR…ITDRANEKLF (116 aa)).

This sequence belongs to the luteoviruses RNA polymerase family.

It carries out the reaction RNA(n) + a ribonucleoside 5'-triphosphate = RNA(n+1) + diphosphate. Probable polymerase. The sequence is that of Putative RNA-directed RNA polymerase from Barley yellow dwarf virus (isolate MAV) (BYDV).